The chain runs to 505 residues: Cytochrome P450 9b2 (505 aa).

Cys-449 contacts heme.

The protein belongs to the cytochrome P450 family. It depends on heme as a cofactor.

It is found in the endoplasmic reticulum membrane. Its subcellular location is the microsome membrane. May be involved in the metabolism of insect hormones and in the breakdown of synthetic insecticides. This chain is Cytochrome P450 9b2 (Cyp9b2), found in Drosophila melanogaster (Fruit fly).